Consider the following 77-residue polypeptide: Acyl carrier protein (77 aa).

In terms of domain architecture, Carrier spans Ser2–Gly77. At Ser37 the chain carries O-(pantetheine 4'-phosphoryl)serine.

Belongs to the acyl carrier protein (ACP) family. In terms of processing, 4'-phosphopantetheine is transferred from CoA to a specific serine of apo-ACP by AcpS. This modification is essential for activity because fatty acids are bound in thioester linkage to the sulfhydryl of the prosthetic group.

Its subcellular location is the cytoplasm. It participates in lipid metabolism; fatty acid biosynthesis. Functionally, carrier of the growing fatty acid chain in fatty acid biosynthesis. The polypeptide is Acyl carrier protein (Psychromonas ingrahamii (strain DSM 17664 / CCUG 51855 / 37)).